Here is a 439-residue protein sequence, read N- to C-terminus: 3-phosphoshikimate 1-carboxyvinyltransferase (439 aa).

Positions 21, 22, and 26 each coordinate 3-phosphoshikimate. Residue K21 coordinates phosphoenolpyruvate. Residues G94 and R122 each contribute to the phosphoenolpyruvate site. The 3-phosphoshikimate site is built by S167, Q169, D320, and K347. Q169 provides a ligand contact to phosphoenolpyruvate. D320 functions as the Proton acceptor in the catalytic mechanism. The phosphoenolpyruvate site is built by R351 and R395.

It belongs to the EPSP synthase family. As to quaternary structure, monomer.

It is found in the cytoplasm. It carries out the reaction 3-phosphoshikimate + phosphoenolpyruvate = 5-O-(1-carboxyvinyl)-3-phosphoshikimate + phosphate. Its pathway is metabolic intermediate biosynthesis; chorismate biosynthesis; chorismate from D-erythrose 4-phosphate and phosphoenolpyruvate: step 6/7. Catalyzes the transfer of the enolpyruvyl moiety of phosphoenolpyruvate (PEP) to the 5-hydroxyl of shikimate-3-phosphate (S3P) to produce enolpyruvyl shikimate-3-phosphate and inorganic phosphate. This Hyphomonas neptunium (strain ATCC 15444) protein is 3-phosphoshikimate 1-carboxyvinyltransferase.